Here is a 485-residue protein sequence, read N- to C-terminus: Aspartyl/glutamyl-tRNA(Asn/Gln) amidotransferase subunit B (485 aa).

Belongs to the GatB/GatE family. GatB subfamily. Heterotrimer of A, B and C subunits.

It carries out the reaction L-glutamyl-tRNA(Gln) + L-glutamine + ATP + H2O = L-glutaminyl-tRNA(Gln) + L-glutamate + ADP + phosphate + H(+). The catalysed reaction is L-aspartyl-tRNA(Asn) + L-glutamine + ATP + H2O = L-asparaginyl-tRNA(Asn) + L-glutamate + ADP + phosphate + 2 H(+). Allows the formation of correctly charged Asn-tRNA(Asn) or Gln-tRNA(Gln) through the transamidation of misacylated Asp-tRNA(Asn) or Glu-tRNA(Gln) in organisms which lack either or both of asparaginyl-tRNA or glutaminyl-tRNA synthetases. The reaction takes place in the presence of glutamine and ATP through an activated phospho-Asp-tRNA(Asn) or phospho-Glu-tRNA(Gln). The chain is Aspartyl/glutamyl-tRNA(Asn/Gln) amidotransferase subunit B from Borreliella afzelii (strain PKo) (Borrelia afzelii).